We begin with the raw amino-acid sequence, 305 residues long: Alpha-N-acetylgalactosaminide alpha-2,6-sialyltransferase 3 (305 aa).

The Cytoplasmic portion of the chain corresponds to 1-8; it reads MACILKRK. A helical; Signal-anchor for type II membrane protein transmembrane segment spans residues 9-28; it reads SVIAVSFIAAFLFLLVVRLV. Over 29–305 the chain is Lumenal; it reads NEVNFPLLLN…IFTHPNWTLS (277 aa). A disulfide bond links Cys-80 and Cys-229. 3 N-linked (GlcNAc...) asparagine glycosylation sites follow: Asn-148, Asn-239, and Asn-301.

This sequence belongs to the glycosyltransferase 29 family. Expressed in brain and kidney. Observed in the epithelium of the proximal tubules, marginal expression was also found in the distal tubules and collecting tubules.

It localises to the golgi apparatus membrane. The enzyme catalyses an alpha-Neu5Ac-(2-&gt;3)-beta-D-Gal-(1-&gt;3)-D-GlcNAc derivative + CMP-N-acetyl-beta-neuraminate = an alpha-Neu5Ac-(2-&gt;3)-beta-D-Gal-(1-&gt;3)-[alpha-Neu5Ac-(2-&gt;6)]-D-GlcNAc derivative + CMP + H(+). It catalyses the reaction a ganglioside GM1b (d18:1(4E)) + CMP-N-acetyl-beta-neuraminate = a ganglioside GD1alpha (d18:1(4E)) + CMP + H(+). The catalysed reaction is a globoside MSGG + CMP-N-acetyl-beta-neuraminate = a globoside DSGG + CMP + H(+). It carries out the reaction 3-O-[alpha-Neu5Ac-(2-&gt;3)-beta-D-Gal-(1-&gt;3)-alpha-D-GalNAc]-L-Ser-[protein] + CMP-N-acetyl-beta-neuraminate = a 3-O-{alpha-Neu5Ac-(2-&gt;3)-beta-D-Gal-(1-&gt;3)-[alpha-Neu5Ac-(2-&gt;6)]-alpha-D-GalNAc}-L-seryl-[protein] + CMP + H(+). The enzyme catalyses 3-O-[alpha-Neu5Ac-(2-&gt;3)-beta-D-Gal-(1-&gt;3)-alpha-D-GalNAc]-L-Thr-[protein] + CMP-N-acetyl-beta-neuraminate = a 3-O-{alpha-Neu5Ac-(2-&gt;3)-beta-D-Gal-(1-&gt;3)-[alpha-Neu5Ac-(2-&gt;6)]-alpha-D-GalNAc}-L-threonyl-[protein] + CMP + H(+). The protein operates within protein modification; protein glycosylation. Its pathway is glycolipid biosynthesis. Transfers the sialyl group (N-acetyl-alpha-neuraminyl or NeuAc) from CMP-NeuAc to the GalNAc residue on the NeuAc-alpha-2,3-Gal-beta-1,3-GalNAc sequence of glycoproteins and glycolipids forming an alpha-2,6-linkage. Produces branched type disialyl structures by transfer of a sialyl group onto a GalNAc residue inside the backbone core chains. ST6GalNAcIII prefers glycolipids to glycoproteins, predominantly catalyzing the biosynthesis of ganglioside GD1alpha from GM1b. GD1alpha is a critical molecule in the communication and interaction between neuronal cells and their supportive cells, particularly in brain tissues, and functions as an adhesion molecule in the process of metastasis. Sialylation of glycoproteins or glycosphingolipids is very important in tumor development, neuronal development, nerve repair, immunological processes and regulation of hormone sensitivity. The chain is Alpha-N-acetylgalactosaminide alpha-2,6-sialyltransferase 3 (ST6GALNAC3) from Homo sapiens (Human).